Reading from the N-terminus, the 498-residue chain is 3-octaprenyl-4-hydroxybenzoate carboxy-lyase (498 aa).

Residue N176 participates in Mn(2+) binding. Residues 179-181 (IYR), 193-195 (RWL), and 198-199 (RG) each bind prenylated FMN. Residue E242 participates in Mn(2+) binding. The Proton donor role is filled by D291.

This sequence belongs to the UbiD family. Homohexamer. Prenylated FMN is required as a cofactor. Requires Mn(2+) as cofactor.

The protein localises to the cell membrane. It carries out the reaction a 4-hydroxy-3-(all-trans-polyprenyl)benzoate + H(+) = a 2-(all-trans-polyprenyl)phenol + CO2. Its pathway is cofactor biosynthesis; ubiquinone biosynthesis. Functionally, catalyzes the decarboxylation of 3-octaprenyl-4-hydroxy benzoate to 2-octaprenylphenol, an intermediate step in ubiquinone biosynthesis. The polypeptide is 3-octaprenyl-4-hydroxybenzoate carboxy-lyase (Escherichia coli O6:K15:H31 (strain 536 / UPEC)).